Reading from the N-terminus, the 262-residue chain is Hemin import ATP-binding protein HmuV (262 aa).

An ABC transporter domain is found at 3-244 (LQARNLTLAR…DHMRRVYGIE (242 aa)). Residue 35–42 (GANGAGKS) participates in ATP binding.

The protein belongs to the ABC transporter superfamily. Heme (hemin) importer (TC 3.A.1.14.5) family. In terms of assembly, the complex is composed of two ATP-binding proteins (HmuV), two transmembrane proteins (HmuU) and a solute-binding protein (HmuT).

Its subcellular location is the cell inner membrane. In terms of biological role, part of the ABC transporter complex HmuTUV involved in hemin import. Responsible for energy coupling to the transport system. The polypeptide is Hemin import ATP-binding protein HmuV (Bordetella pertussis (strain Tohama I / ATCC BAA-589 / NCTC 13251)).